A 295-amino-acid chain; its full sequence is 33 kDa chaperonin (295 aa).

Intrachain disulfides connect Cys237-Cys239 and Cys270-Cys273.

Belongs to the HSP33 family. In terms of processing, under oxidizing conditions two disulfide bonds are formed involving the reactive cysteines. Under reducing conditions zinc is bound to the reactive cysteines and the protein is inactive.

It localises to the cytoplasm. In terms of biological role, redox regulated molecular chaperone. Protects both thermally unfolding and oxidatively damaged proteins from irreversible aggregation. Plays an important role in the bacterial defense system toward oxidative stress. The chain is 33 kDa chaperonin from Lactiplantibacillus plantarum (strain ATCC BAA-793 / NCIMB 8826 / WCFS1) (Lactobacillus plantarum).